The primary structure comprises 238 residues: Leucyl/phenylalanyl-tRNA--protein transferase (238 aa).

The protein belongs to the L/F-transferase family.

The protein resides in the cytoplasm. The catalysed reaction is N-terminal L-lysyl-[protein] + L-leucyl-tRNA(Leu) = N-terminal L-leucyl-L-lysyl-[protein] + tRNA(Leu) + H(+). It catalyses the reaction N-terminal L-arginyl-[protein] + L-leucyl-tRNA(Leu) = N-terminal L-leucyl-L-arginyl-[protein] + tRNA(Leu) + H(+). The enzyme catalyses L-phenylalanyl-tRNA(Phe) + an N-terminal L-alpha-aminoacyl-[protein] = an N-terminal L-phenylalanyl-L-alpha-aminoacyl-[protein] + tRNA(Phe). Functions in the N-end rule pathway of protein degradation where it conjugates Leu, Phe and, less efficiently, Met from aminoacyl-tRNAs to the N-termini of proteins containing an N-terminal arginine or lysine. This Psychromonas ingrahamii (strain DSM 17664 / CCUG 51855 / 37) protein is Leucyl/phenylalanyl-tRNA--protein transferase.